An 877-amino-acid chain; its full sequence is Polycomb protein Scm (877 aa).

The tract at residues 1–57 is disordered; the sequence is MSGGRDSSTSSGSNSAAPGASTNATSSASASASSTSTSASPGSTTSPASTQRQRGRP. Over residues 7-50 the composition is skewed to low complexity; sequence SSTSSGSNSAAPGASTNATSSASASASSTSTSASPGSTTSPAST. The FCS-type zinc finger occupies 54–93; sequence RGRPAKRATCTWCGEGKLPLQYVLPTQTGKKEFCSETCIA. C63, C66, C87, and C91 together coordinate Zn(2+). MBT repeat units lie at residues 175–273 and 281–382; these read FDWD…LQPP and SSWP…MQPP. 3 disordered regions span residues 535 to 621, 652 to 692, and 713 to 735; these read NSRK…SNKV, TNTN…GGSA, and ANVK…ASLP. T546 carries the phosphothreonine modification. Phosphoserine occurs at positions 549 and 550. Positions 560 to 569 are enriched in polar residues; the sequence is QSNSATTSPS. The residue at position 585 (S585) is a Phosphoserine. The span at 598-620 shows a compositional bias: low complexity; that stretch reads ASQQNSNHSLNNNNNSASKSSNK. Residues 724–735 are compositionally biased toward low complexity; that stretch reads SPTTLSSSASLP. Residues 806 to 876 form the SAM domain; the sequence is WTIEEVIQYI…KVNGRRNNLA (71 aa).

The protein belongs to the SCM family. In terms of assembly, scm associates with the PRC1 core complex containing PSC, PC, PH and Sce/RING1. Forms homotypic and heterotypic interactions. Interacts with the SAM domain of ph-p via its SAM domain in vitro. Interacts with corto in vitro.

Its subcellular location is the nucleus. In terms of biological role, polycomb group (PcG) protein. PcG proteins act by forming multiprotein complexes, which are required to maintain the transcriptionally repressive state of homeotic genes throughout development. PcG proteins are not required to initiate repression, but to maintain it during later stages of development. They probably act via the methylation of histones, rendering chromatin heritably changed in its expressibility. This Drosophila melanogaster (Fruit fly) protein is Polycomb protein Scm.